A 274-amino-acid polypeptide reads, in one-letter code: Large ribosomal subunit protein uL2 (274 aa).

Disordered regions lie at residues 1 to 23 and 222 to 242; these read MAIK…SFEE and GSAM…SPIG.

It belongs to the universal ribosomal protein uL2 family. As to quaternary structure, part of the 50S ribosomal subunit. Forms a bridge to the 30S subunit in the 70S ribosome.

Its function is as follows. One of the primary rRNA binding proteins. Required for association of the 30S and 50S subunits to form the 70S ribosome, for tRNA binding and peptide bond formation. It has been suggested to have peptidyltransferase activity; this is somewhat controversial. Makes several contacts with the 16S rRNA in the 70S ribosome. This Dehalococcoides mccartyi (strain ATCC BAA-2266 / KCTC 15142 / 195) (Dehalococcoides ethenogenes (strain 195)) protein is Large ribosomal subunit protein uL2.